Reading from the N-terminus, the 346-residue chain is Syntaxin UFE1 (346 aa).

Residues 1–324 are Cytoplasmic-facing; the sequence is MMSDLTPIFR…RKAKRAAGRT (324 aa). The 63-residue stretch at 255–317 folds into the t-SNARE coiled-coil homology domain; sequence LNQKNEQLKK…KKGNKELRKA (63 aa). A helical; Anchor for type IV membrane protein transmembrane segment spans residues 325 to 342; sequence AKMTTYGAIIMGVFILFL. The Lumenal segment spans residues 343–346; it reads DYVG.

Belongs to the syntaxin family. As to quaternary structure, component of a SNARE complex consisting of UFE1, USE1, SEC20 and SEC22 or YKT6.

It is found in the endoplasmic reticulum membrane. In terms of biological role, syntaxin required for targeting and fusion of Golgi-derived retrograde transport vesicles with the ER. This Saccharomyces cerevisiae (strain ATCC 204508 / S288c) (Baker's yeast) protein is Syntaxin UFE1 (UFE1).